A 654-amino-acid polypeptide reads, in one-letter code: Endoplasmic reticulum chaperone BiP (654 aa).

A signal peptide spans 1 to 18; it reads MKLSLVAAMLLLLSAARA. The tract at residues 1–80 is required for interaction with ELAPOR1; that stretch reads MKLSLVAAML…EGERLIGDAA (80 aa). 36 to 39 lines the ATP pocket; sequence GTTY. At serine 86 the chain carries Phosphoserine. Residue lysine 96 participates in ATP binding. The residue at position 125 (lysine 125) is an N6-acetyllysine. The nucleotide-binding (NBD) stretch occupies residues 125–280; sequence KPYIQVDIGG…KKKTGKDVRK (156 aa). Tyrosine 160 carries the post-translational modification 3'-nitrotyrosine. Position 213 is an N6-acetyllysine (lysine 213). 227 to 229 contacts ATP; it reads GGT. Lysine 271 carries the post-translational modification N6-acetyllysine. 293–300 provides a ligand contact to ATP; sequence EKAKRALS. Lysine 326 is subject to N6-acetyllysine. Lysine 352 participates in a covalent cross-link: Glycyl lysine isopeptide (Lys-Gly) (interchain with G-Cter in SUMO2). The residue at position 353 (lysine 353) is an N6-acetyllysine; alternate. Residue lysine 353 forms a Glycyl lysine isopeptide (Lys-Gly) (interchain with G-Cter in SUMO1); alternate linkage. 364 to 367 lines the ATP pocket; that stretch reads GSTR. The interdomain linker stretch occupies residues 409 to 419; it reads QDTGDLVLLDV. The tract at residues 420–500 is substrate-binding (SBD); it reads CPLTLGIETV…PRGVPQIEVT (81 aa). Lysine 447 carries the N6-succinyllysine modification. Position 492 is an omega-N-methylarginine (arginine 492). Position 518 is an O-AMP-threonine; alternate (threonine 518). At threonine 518 the chain carries Phosphothreonine; alternate. Lysine 585 carries the N6,N6,N6-trimethyllysine; by METTL21A; in vitro modification. Lysine 585 is modified (N6,N6-dimethyllysine; alternate). N6-methyllysine; alternate is present on lysine 585. Lysine 591 carries the post-translational modification N6-methyllysine. The disordered stretch occupies residues 633–654; sequence KLYGSAGPPPTGEEDTAEKDEL. Phosphothreonine is present on residues threonine 643 and threonine 648. The segment covering 644–654 has biased composition (acidic residues); it reads GEEDTAEKDEL. A Prevents secretion from ER motif is present at residues 651 to 654; the sequence is KDEL.

Belongs to the heat shock protein 70 family. In terms of assembly, monomer and homooligomer; homooligomerization via the interdomain linker inactivates the chaperone activity and acts as a storage of HSPA5/BiP molecules. Interacts with DNAJC1 (via J domain). Component of an EIF2 complex at least composed of CELF1/CUGBP1, CALR, CALR3, EIF2S1, EIF2S2, HSP90B1 and HSPA5. Part of a large chaperone multiprotein complex comprising DNAJB11, HSP90B1, HSPA5, HYOU, PDIA2, PDIA4, PDIA6, PPIB, SDF2L1, UGGT1 and very small amounts of ERP29, but not, or at very low levels, CALR nor CANX. Interacts with TMEM132A and TRIM21. May form a complex with ERLEC1, OS9, SEL1L and SYVN1. Interacts with DNAJC10. Interacts with DNAJB9/ERdj4; leading to recruit HSPA5/BiP to ERN1/IRE1. Interacts with ERN1/IRE1 (via luminal domain); the interaction takes place following interaction with DNAJB9/ERdj4 and leads to inactivate ERN1/IRE1, the interaction also competitively inhibits ERN1 interaction with MANF. Interacts directly with MANF (via SAP domain); the interaction inhibits ATP binding to HSPA5/BiP and subsequent nucleotide exchange. Interacts with EIF2AK3/PERK (via luminal domain); interaction leads to inactivate EIF2AK3/PERK. Interacts with MX1. Interacts with METTL23. Interacts with CEMIP; the interaction induces calcium leakage from the endoplasmic reticulum and cell migration. Interacts with PCSK4 form; the interaction takes place in the endoplasmic reticulum. Interacts with CIPC. Interacts with CCDC88B (via C-terminus); the interaction opposes ERN1-mediated JNK activation, protecting against apoptosis. Interacts with INPP5K; necessary for INPP5K localization at the endoplasmic reticulum. Interacts with MANF; the interaction is direct. Interacts with LOXL2; leading to activate the ERN1/IRE1-XBP1 pathway of the unfolded protein response. Interacts with CLU under stressed condition; interaction increases CLU protein stability; facilitates its retrotranslocation and redistribution to the mitochondria; cooperatively suppress stress-induced apoptosis by stabilizing mitochondrial membrane integrity. Interacts with CCDC47. Interacts with CLN3. Interacts with ELAPOR1; may regulate the function of HSPA5 in apoptosis and cell proliferation. Interacts with CASP7. Interacts with ILDR2; the interaction stabilizes ILDR2 expression. Interacts with ADAM7. (Microbial infection) Interacts with Japanese encephalitis virus envelope protein E. As to quaternary structure, (Microbial infection) Interacts with R.delemar invasin CotH3 on the surface of nasal epithelial cells. Interacts with R.delemar invasin CotH2. In terms of assembly, (Microbial infection) Interacts with Zika virus envelope protein E and non-structural protein 1 in a chaperone-client manner. In terms of processing, AMPylated by FICD. In unstressed cells, AMPylation at Thr-518 by FICD inactivates the chaperome activity: AMPylated form is locked in a relatively inert state and only weakly stimulated by J domain-containing proteins. In response to endoplasmic reticulum stress, de-AMPylation by the same protein, FICD, restores the chaperone activity.

Its subcellular location is the endoplasmic reticulum lumen. It is found in the melanosome. The protein resides in the cytoplasm. The protein localises to the cell surface. It catalyses the reaction ATP + H2O = ADP + phosphate + H(+). With respect to regulation, the chaperone activity is regulated by ATP-induced allosteric coupling of the nucleotide-binding (NBD) and substrate-binding (SBD) domains. In the ADP-bound and nucleotide-free (apo) states, the two domains have little interaction. In contrast, in the ATP-bound state the two domains are tightly coupled, which results in drastically accelerated kinetics in both binding and release of polypeptide substrates. J domain-containing co-chaperones (DNAJB9/ERdj4 or DNAJC10/ERdj5) stimulate the ATPase activity and are required for efficient substrate recognition by HSPA5/BiP. Homooligomerization inactivates participating HSPA5/BiP protomers and probably act as reservoirs to store HSPA5/BiP molecules when they are not needed by the cell. Its function is as follows. Endoplasmic reticulum chaperone that plays a key role in protein folding and quality control in the endoplasmic reticulum lumen. Involved in the correct folding of proteins and degradation of misfolded proteins via its interaction with DNAJC10/ERdj5, probably to facilitate the release of DNAJC10/ERdj5 from its substrate. Acts as a key repressor of the EIF2AK3/PERK and ERN1/IRE1-mediated unfolded protein response (UPR). In the unstressed endoplasmic reticulum, recruited by DNAJB9/ERdj4 to the luminal region of ERN1/IRE1, leading to disrupt the dimerization of ERN1/IRE1, thereby inactivating ERN1/IRE1. Also binds and inactivates EIF2AK3/PERK in unstressed cells. Accumulation of misfolded protein in the endoplasmic reticulum causes release of HSPA5/BiP from ERN1/IRE1 and EIF2AK3/PERK, allowing their homodimerization and subsequent activation. Plays an auxiliary role in post-translational transport of small presecretory proteins across endoplasmic reticulum (ER). May function as an allosteric modulator for SEC61 channel-forming translocon complex, likely cooperating with SEC62 to enable the productive insertion of these precursors into SEC61 channel. Appears to specifically regulate translocation of precursors having inhibitory residues in their mature region that weaken channel gating. May also play a role in apoptosis and cell proliferation. (Microbial infection) Plays an important role in viral binding to the host cell membrane and entry for several flaviruses such as Dengue virus, Zika virus and Japanese encephalitis virus. Acts as a component of the cellular receptor for Dengue virus serotype 2/DENV-2 on human liver cells. Functionally, (Microbial infection) Acts as a receptor for CotH proteins expressed by fungi of the order mucorales, the causative agent of mucormycosis, which plays an important role in epithelial cell invasion by the fungi. Acts as a receptor for R.delemar CotH3 in nasal epithelial cells, which may be an early step in rhinoorbital/cerebral mucormycosis (RCM) disease progression. The chain is Endoplasmic reticulum chaperone BiP from Homo sapiens (Human).